The primary structure comprises 320 residues: Cytochrome f (320 aa).

An N-terminal signal peptide occupies residues 1 to 35 (MQNRNTFSWIKEQMTRSISVSIMIYVITRTAISNA). 4 residues coordinate heme: tyrosine 36, cysteine 56, cysteine 59, and histidine 60. The chain crosses the membrane as a helical span at residues 286–306 (VQGLLFFLASVILAQIFLVLK).

This sequence belongs to the cytochrome f family. In terms of assembly, the 4 large subunits of the cytochrome b6-f complex are cytochrome b6, subunit IV (17 kDa polypeptide, petD), cytochrome f and the Rieske protein, while the 4 small subunits are PetG, PetL, PetM and PetN. The complex functions as a dimer. Heme is required as a cofactor.

The protein localises to the plastid. It localises to the chloroplast thylakoid membrane. Its function is as follows. Component of the cytochrome b6-f complex, which mediates electron transfer between photosystem II (PSII) and photosystem I (PSI), cyclic electron flow around PSI, and state transitions. The sequence is that of Cytochrome f from Platanus occidentalis (Sycamore).